We begin with the raw amino-acid sequence, 2716 residues long: Trithorax group protein osa (2716 aa).

The segment at M1 to N969 is disordered. Over residues S7–P38 the composition is skewed to low complexity. The span at D54–V64 shows a compositional bias: polar residues. Pro residues predominate over residues Y69–D86. Composition is skewed to low complexity over residues G164–P180, T212–S222, and P238–G257. Pro residues predominate over residues G258–Q272. Over residues L294–Q312 the composition is skewed to polar residues. Residues G320–Q346 show a composition bias toward low complexity. Pro residues predominate over residues G350–G359. Residues T360–P377 are compositionally biased toward low complexity. T384 carries the phosphothreonine modification. Residues N394–Q403 are compositionally biased toward polar residues. A compositionally biased stretch (low complexity) spans W411–H423. The segment covering P424 to Q466 has biased composition (pro residues). Low complexity-rich tracts occupy residues P467–Q476 and M509–P526. Over residues G557–P571 the composition is skewed to pro residues. Residues P572 to Q594 show a composition bias toward low complexity. 4 stretches are compositionally biased toward pro residues: residues Q595 to N604, P651 to P669, T747 to Q760, and P806 to G818. A Phosphothreonine modification is found at T747. A compositionally biased stretch (low complexity) spans P819 to G838. The span at Q839–S851 shows a compositional bias: gly residues. Composition is skewed to polar residues over residues Q859–P868 and S879–A904. Residues N1000–D1091 enclose the ARID domain. Disordered stretches follow at residues S1108–G1766, H1914–D1936, and K2045–P2123. 2 stretches are compositionally biased toward low complexity: residues G1129 to S1139 and G1164 to P1173. A compositionally biased stretch (polar residues) spans G1181–Q1193. Over residues A1221–P1256 the composition is skewed to gly residues. The segment covering P1266–G1288 has biased composition (low complexity). Over residues Q1305–P1318 the composition is skewed to pro residues. Positions P1407–Y1427 are enriched in low complexity. Residues S1428 to P1438 show a composition bias toward pro residues. Residues P1456–Y1471 are compositionally biased toward low complexity. Over residues Q1508–P1524 the composition is skewed to polar residues. A compositionally biased stretch (pro residues) spans G1534–Q1548. Residues Q1573–P1593 show a composition bias toward low complexity. A compositionally biased stretch (pro residues) spans P1620–G1629. 2 stretches are compositionally biased toward low complexity: residues M1636 to V1652 and G1715 to S1729. The span at Q1731 to P1744 shows a compositional bias: basic residues. Residues G1755 to G1766 are compositionally biased toward gly residues. Residues L1769–L2517 enclose the EHD domain. S1930, S1932, and S2081 each carry phosphoserine. Composition is skewed to basic and acidic residues over residues A2091 to S2100 and E2109 to P2123. Residues S2168 and S2169 each carry the phosphoserine modification. T2176 carries the post-translational modification Phosphothreonine. The residue at position 2181 (S2181) is a Phosphoserine. The segment covering R2520–A2566 has biased composition (low complexity). Disordered regions lie at residues R2520–S2617 and V2684–A2716. Residues D2570–L2579 show a composition bias toward polar residues. 2 stretches are compositionally biased toward low complexity: residues T2584–S2617 and V2684–P2701.

In terms of assembly, component of the Brahma complex, which is composed of Brm, Osa, Mor, Snr1/Bap45, Bap111/Dalao, Bap55, Bap60 and Bap47. Interacts with Pnr and Chi via its EHD domain. As to expression, ubiquitously expressed in early embryo. In third instar larvae, it is ubiquitously expressed in wing and eye-antenna imaginal disks, with a stronger expression in a band just anterior to the morphogenetic furrow.

It is found in the nucleus. Its function is as follows. Trithorax group (trxG) protein required for embryonic segmentation, development of the notum and wing margin, and photoreceptor differentiation. Required for the activation of genes such as Antp, Ubx and Eve. Binds to DNA without specific affinity, suggesting that it is recruited to promoters by promoter-specific proteins. Essential component of the Brahma complex, a multiprotein complex which is the equivalent of the yeast SWI/SNF complex and acts by remodeling the chromatin by catalyzing an ATP-dependent alteration in the structure of nucleosomal DNA. This complex can both serve as a transcriptional coactivator or corepressor, depending on the context. Acts as an essential coactivator for Zeste, which recruits the whole complex to specific genes. In contrast, it acts as a corepressor for Wg target genes, possibly via an interaction with Pan and Gro. It also acts as a negative regulator for proneural achaete-scute, when it is directly recruited by Pan and Chi. Also represses E2f activation. In Drosophila melanogaster (Fruit fly), this protein is Trithorax group protein osa (osa).